We begin with the raw amino-acid sequence, 568 residues long: MEAKIVKVSDSSYKDGLGKKRKHPGNYTPYDSGRSYAKLQWVLSPNSSTQKLEKRRNLDGENKVIVSENHVEKSLVRYFSYYKKTGVPKRVMFHENGEWIDLPDHILCDIRNDLEAKRATIEFNWCGRHFLLDFLHMYRLDLETGVKTQLAWIDIAGKCFFPETFDTLERDGCHHIRGEDPEQHDQREIKLHIEIDVNSGELPRLNLNVVTDESGDNMDDFQAVQRSSNGPNDEASEDSCSRELDDAVEKWDKTETDRFSGVKPAEEELDKDAVKQMFALGAATLGHVESLDVYQFSSEIAKARLSLFQKQADITKKHRGDANIRYAWVPAKKEVLSAVMMHGLGVGGAFIKKSMYGVGVHAANCPYFSARYCDIDDNGVRHMVLCRVIMGNMEPLRGDNTQYFTGGEEYDNGVDDVESPKHYLIWNMNMNTHIYPEFVVSFKLSIPNAEGNILPTTQSRHESSGLTLEGPKGSPSNEPGRVSNGGSGSEKNSSSSRRPRSPIMPFPLLFKAISSKIARKDMDLIIAGYQELREKKVSRKEFYKTLSMIVGDDDLLISTITGLQRSLG.

Over residues 1–18 (MEAKIVKVSDSSYKDGLG) the composition is skewed to basic and acidic residues. Residues 1–32 (MEAKIVKVSDSSYKDGLGKKRKHPGNYTPYDS) are disordered. Positions 77–152 (RYFSYYKKTG…ETGVKTQLAW (76 aa)) constitute a WWE domain. Disordered regions lie at residues 220 to 241 (DFQAVQRSSNGPNDEASEDSCS) and 453 to 500 (ILPT…RRPR). The region spanning 245 to 463 (DDAVEKWDKT…LPTTQSRHES (219 aa)) is the PARP catalytic domain. The RST domain maps to 497 to 568 (RRPRSPIMPF…TITGLQRSLG (72 aa)).

As to quaternary structure, interacts with DREB2A, DREB2B, DREB2C and NAC082. Expressed in young developing tissues, such as young leaves and flowers and root tips. In mature plants, expressed in vasculature of leaves and roots.

The protein resides in the nucleus matrix. In terms of biological role, probable inactive ADP-ribosyltransferase that functions with RCD1 to regulate oxidative stress, hormonal and developmental responses. May regulate some stress-responsive genes. Seems to play a smaller developmental role than R. In Arabidopsis thaliana (Mouse-ear cress), this protein is Probable inactive poly [ADP-ribose] polymerase SRO1 (SRO1).